The chain runs to 498 residues: ATP synthase subunit beta, chloroplastic (498 aa).

172 to 179 serves as a coordination point for ATP; the sequence is GGAGVGKT.

Belongs to the ATPase alpha/beta chains family. As to quaternary structure, F-type ATPases have 2 components, CF(1) - the catalytic core - and CF(0) - the membrane proton channel. CF(1) has five subunits: alpha(3), beta(3), gamma(1), delta(1), epsilon(1). CF(0) has four main subunits: a(1), b(1), b'(1) and c(9-12).

The protein localises to the plastid. It localises to the chloroplast thylakoid membrane. It catalyses the reaction ATP + H2O + 4 H(+)(in) = ADP + phosphate + 5 H(+)(out). In terms of biological role, produces ATP from ADP in the presence of a proton gradient across the membrane. The catalytic sites are hosted primarily by the beta subunits. The polypeptide is ATP synthase subunit beta, chloroplastic (Solanum lycopersicum (Tomato)).